A 446-amino-acid polypeptide reads, in one-letter code: Na(+)-translocating NADH-quinone reductase subunit A (446 aa).

The protein belongs to the NqrA family. In terms of assembly, composed of six subunits; NqrA, NqrB, NqrC, NqrD, NqrE and NqrF.

It catalyses the reaction a ubiquinone + n Na(+)(in) + NADH + H(+) = a ubiquinol + n Na(+)(out) + NAD(+). NQR complex catalyzes the reduction of ubiquinone-1 to ubiquinol by two successive reactions, coupled with the transport of Na(+) ions from the cytoplasm to the periplasm. NqrA to NqrE are probably involved in the second step, the conversion of ubisemiquinone to ubiquinol. This Vibrio parahaemolyticus serotype O3:K6 (strain RIMD 2210633) protein is Na(+)-translocating NADH-quinone reductase subunit A.